The following is a 362-amino-acid chain: Bifunctional nitrilase/nitrile hydratase NIT4 (362 aa).

The CN hydrolase domain occupies 31-307 (VRATVVQAST…EALITADLDL (277 aa)). Glutamate 71 functions as the Proton acceptor in the catalytic mechanism. Lysine 162 (proton donor) is an active-site residue. Cysteine 196 (nucleophile) is an active-site residue.

It belongs to the carbon-nitrogen hydrolase superfamily. Nitrilase family.

It carries out the reaction a nitrile + 2 H2O = a carboxylate + NH4(+). It catalyses the reaction 3-cyano-L-alanine + 2 H2O = L-aspartate + NH4(+). Highly specific for beta-cyano-L-alanine (Ala(CN)). Low activity with 3-phenylpropionitrile (PPN). Not associated with auxin production but may be involved in cyanide detoxification. The sequence is that of Bifunctional nitrilase/nitrile hydratase NIT4 (NIT4) from Oryza sativa subsp. japonica (Rice).